Consider the following 179-residue polypeptide: ATP-dependent protease subunit HslV (179 aa).

Threonine 7 is a catalytic residue. Na(+) is bound by residues glycine 162, cysteine 165, and threonine 168.

Belongs to the peptidase T1B family. HslV subfamily. As to quaternary structure, a double ring-shaped homohexamer of HslV is capped on each side by a ring-shaped HslU homohexamer. The assembly of the HslU/HslV complex is dependent on binding of ATP.

The protein resides in the cytoplasm. The catalysed reaction is ATP-dependent cleavage of peptide bonds with broad specificity.. Its activity is regulated as follows. Allosterically activated by HslU binding. Functionally, protease subunit of a proteasome-like degradation complex believed to be a general protein degrading machinery. The polypeptide is ATP-dependent protease subunit HslV (Bordetella petrii (strain ATCC BAA-461 / DSM 12804 / CCUG 43448)).